The primary structure comprises 471 residues: MAGVRFLDLVKPFTPFLPEVQAPERKVPFNQKIMWTAVTLMIFLVMSEIPLYGINSSDKSDALYWLRMMLASNRGSLMELGITPIVSSGMVFQLLGGTQLIEVNMDLKSDRELYQTAQKLFAIILSLGQATVYVLTGMYGPPKDLGVGVCLLLIFQLVLAALVVILLDELLQKGYGLGSGISLFIATNICEQIFWKAFAPTTVNKGRGYEFEGAIVAFVHLLFTRKDKKRAIIEAFTRQDLPNMSQLVTTVAIFAAVIYLQGFRVDIPVKSSKQRGPYGVFPIKLFYTSNLPIMLQSALTSNIFIISQMLFKKFPTNVLVRLLGVWDGREGMQQLFPVSGIAYYMQPPFNAKEALADPVKTVIYIAFVLGVCAVFSATWIEISGSSPRDVAKQFKEQGLVIAGRRETSAYKELKRIIPTAAAFGGATIGALSVASDLLGALSSGTGILMAVTTIYGYYEMAAKEGYVDAAI.

Topologically, residues Met1–Ile33 are cytoplasmic. The chain crosses the membrane as a helical span at residues Met34–Ile54. Residues Asn55–Ser76 lie on the Lumenal side of the membrane. Residues Leu77–Gly97 traverse the membrane as a helical segment. At Thr98–Lys119 the chain is on the cytoplasmic side. The chain crosses the membrane as a helical span at residues Leu120–Gly140. Residues Pro141 to Gly146 are Lumenal-facing. The helical transmembrane segment at Val147 to Leu167 threads the bilayer. The Cytoplasmic segment spans residues Asp168–Gln246. The chain crosses the membrane as a helical span at residues Leu247–Ile267. Residues Pro268 to Thr361 lie on the Lumenal side of the membrane. A helical transmembrane segment spans residues Val362–Ile382. Residues Ser383–Arg415 lie on the Cytoplasmic side of the membrane. A helical transmembrane segment spans residues Ile416–Ala434. Topologically, residues Ser435–Ala440 are lumenal. Residues Leu441–Tyr458 form a helical membrane-spanning segment. Residues Glu459–Ile471 lie on the Cytoplasmic side of the membrane.

The protein belongs to the SecY/SEC61-alpha family. As to quaternary structure, heterotrimeric complex composed of SEC61-alpha, SEC61-beta and SEC61-gamma.

It is found in the endoplasmic reticulum membrane. In terms of biological role, appears to play a crucial role in the insertion of secretory and membrane polypeptides into the ER. It is required for assembly of membrane and secretory proteins and is essential for cell growth. It interacts with other membrane proteins required for protein translocation. Upon binding to SEC62/63 complex, secretory precursor polypeptides may engage SEC61 to begin membrane penetration event. A cycle of assembly and disassembly of SEC62/63 from SEC61 may govern the activity of the translocase. The protein is Protein transport protein SEC61 subunit alpha (SEC61) of Yarrowia lipolytica (strain CLIB 122 / E 150) (Yeast).